Here is a 148-residue protein sequence, read N- to C-terminus: Single-stranded DNA-binding protein 1-B, mitochondrial (148 aa).

The transit peptide at 1 to 17 directs the protein to the mitochondrion; that stretch reads MFHRPVLQVFRQFARCQ. Residues 30–142 form the SSB domain; that stretch reads MNKVQLLGRV…IIADNIIFLT (113 aa).

Homotetramer.

It is found in the mitochondrion. The protein resides in the mitochondrion matrix. The protein localises to the mitochondrion nucleoid. In terms of biological role, binds preferentially and cooperatively to pyrimidine rich single-stranded DNA (ss-DNA). Required to maintain the copy number of mitochondrial DNA (mtDNA) and plays crucial roles during mtDNA replication that stimulate activity of the DNA polymerase at the replication fork. May also function in mtDNA repair. The chain is Single-stranded DNA-binding protein 1-B, mitochondrial (ssbp1-b) from Xenopus laevis (African clawed frog).